Here is a 141-residue protein sequence, read N- to C-terminus: MQLTSFTDYGLRALIYMASLPSGKMTSISEVTEVYGVSRNHMVKIINQLSRAGLVMAVRGKNGGIRLGKPAETIRIGDVVRELEPLTLVNCSHEFCHITAACRLKQVLQQAVQNFLHELDQYTLADMVKENPPLYKLLLVE.

In terms of domain architecture, HTH rrf2-type spans 2 to 129 (QLTSFTDYGL…DQYTLADMVK (128 aa)). The segment at residues 28-51 (ISEVTEVYGVSRNHMVKIINQLSR) is a DNA-binding region (H-T-H motif). [2Fe-2S] cluster is bound by residues Cys91, Cys96, and Cys102.

Requires [2Fe-2S] cluster as cofactor.

Nitric oxide-sensitive repressor of genes involved in protecting the cell against nitrosative stress. May require iron for activity. The protein is HTH-type transcriptional repressor NsrR of Pectobacterium atrosepticum (strain SCRI 1043 / ATCC BAA-672) (Erwinia carotovora subsp. atroseptica).